Reading from the N-terminus, the 91-residue chain is Small ribosomal subunit protein uS19 (91 aa).

The protein belongs to the universal ribosomal protein uS19 family.

Functionally, protein S19 forms a complex with S13 that binds strongly to the 16S ribosomal RNA. The sequence is that of Small ribosomal subunit protein uS19 from Neorickettsia sennetsu (strain ATCC VR-367 / Miyayama) (Ehrlichia sennetsu).